Consider the following 71-residue polypeptide: UPF0434 protein Csal_1588 (71 aa).

It belongs to the UPF0434 family.

The polypeptide is UPF0434 protein Csal_1588 (Chromohalobacter salexigens (strain ATCC BAA-138 / DSM 3043 / CIP 106854 / NCIMB 13768 / 1H11)).